The primary structure comprises 1495 residues: Chromosome partition protein MukB (1495 aa).

60-67 is an ATP binding site; the sequence is GGNGAGKS. 3 coiled-coil regions span residues 322–693, 861–1140, and 1233–1289; these read RART…SQPD, EDVM…AKVS, and IDAI…LQNI. A flexible hinge region spans residues 692–809; sequence PDGSEDARLN…EIPLFGRAAR (118 aa).

It belongs to the SMC family. MukB subfamily. Homodimerization via its hinge domain. Binds to DNA via its C-terminal region. Interacts, and probably forms a ternary complex, with MukE and MukF via its C-terminal region. The complex formation is stimulated by calcium or magnesium. Interacts with tubulin-related protein FtsZ.

The protein localises to the cytoplasm. It localises to the nucleoid. Functionally, plays a central role in chromosome condensation, segregation and cell cycle progression. Functions as a homodimer, which is essential for chromosome partition. Involved in negative DNA supercoiling in vivo, and by this means organize and compact chromosomes. May achieve or facilitate chromosome segregation by condensation DNA from both sides of a centrally located replisome during cell division. This chain is Chromosome partition protein MukB, found in Pasteurella multocida (strain Pm70).